The primary structure comprises 1557 residues: Ras guanine nucleotide exchange factor K (1557 aa).

Pro residues predominate over residues 1 to 16 (MEPTINPPVNLPPPVP). 6 disordered regions span residues 1-121 (MEPT…SYTV), 146-181 (VETLSSSSPSPIKTTTTPPPPVPSKSKSKSSEKLSV), 195-238 (LYQQ…SPQL), 283-347 (SPLP…GLTP), 558-619 (NNNN…DELS), and 881-937 (TNNN…QVNH). 7 stretches are compositionally biased toward low complexity: residues 17–40 (SRSNLSLNYSNNNTNNTNNTNNTN), 52–63 (SSPSSPSSPSPS), 73–90 (NNNNNNNNNNNHINNGNV), 102–114 (ISSPQSSPIHTSS), 148–161 (TLSSSSPSPIKTTT), 195–207 (LYQQQQQQSNPNS), and 222–236 (PPSSSSSSTTPSTSP). Positions 283–310 (SPLPPPPLTIPNKVPPLPMRLPPPPPPQ) are enriched in pro residues. 2 coiled-coil regions span residues 310-338 (QQLDQMYSNNNQQQQQQQQQQQNNESNST) and 591-629 (NNNNNNNNNNNNNNNNNNNNLHQQQDELSSSIQLEEEEL). Residues 311 to 333 (QLDQMYSNNNQQQQQQQQQQQNN) show a composition bias toward low complexity. The segment covering 334-343 (ESNSTTTSEG) has biased composition (polar residues). 2 stretches are compositionally biased toward low complexity: residues 558 to 610 (NNNN…NNNN) and 881 to 928 (TNNN…TPTT). The region spanning 1058–1177 (LNAEIDAATL…QIRNCILKRT (120 aa)) is the N-terminal Ras-GEF domain. Positions 1254 to 1303 (PSISQNTPSSPSLIPSSPRPITSSSSVSSSTLLKSPLSQQAKSRIPETKT) are disordered. Over residues 1261-1291 (PSSPSLIPSSPRPITSSSSVSSSTLLKSPLS) the composition is skewed to low complexity. The Ras-GEF domain occupies 1316 to 1549 (DDEEIARQLT…YHLSLLKEPR (234 aa)).

In terms of biological role, promotes the exchange of Ras-bound GDP by GTP. The chain is Ras guanine nucleotide exchange factor K (gefK) from Dictyostelium discoideum (Social amoeba).